Reading from the N-terminus, the 236-residue chain is Small ribosomal subunit protein uS2c (236 aa).

Belongs to the universal ribosomal protein uS2 family.

It is found in the plastid. Its subcellular location is the chloroplast. The protein is Small ribosomal subunit protein uS2c (rps2) of Oryza sativa (Rice).